We begin with the raw amino-acid sequence, 47 residues long: Diuretic hormone 2 (47 aa).

It belongs to the sauvagine/corticotropin-releasing factor/urotensin I family.

The protein resides in the secreted. Functionally, stimulates fluid secretion by the Malpighian tubules. Increases cyclic AMP production in Malpighian tubules. This Tenebrio molitor (Yellow mealworm beetle) protein is Diuretic hormone 2.